A 189-amino-acid chain; its full sequence is ATP synthase subunit delta (189 aa).

This sequence belongs to the ATPase delta chain family. In terms of assembly, F-type ATPases have 2 components, F(1) - the catalytic core - and F(0) - the membrane proton channel. F(1) has five subunits: alpha(3), beta(3), gamma(1), delta(1), epsilon(1). F(0) has three main subunits: a(1), b(2) and c(10-14). The alpha and beta chains form an alternating ring which encloses part of the gamma chain. F(1) is attached to F(0) by a central stalk formed by the gamma and epsilon chains, while a peripheral stalk is formed by the delta and b chains.

It is found in the cell inner membrane. Its function is as follows. F(1)F(0) ATP synthase produces ATP from ADP in the presence of a proton or sodium gradient. F-type ATPases consist of two structural domains, F(1) containing the extramembraneous catalytic core and F(0) containing the membrane proton channel, linked together by a central stalk and a peripheral stalk. During catalysis, ATP synthesis in the catalytic domain of F(1) is coupled via a rotary mechanism of the central stalk subunits to proton translocation. In terms of biological role, this protein is part of the stalk that links CF(0) to CF(1). It either transmits conformational changes from CF(0) to CF(1) or is implicated in proton conduction. This chain is ATP synthase subunit delta, found in Rickettsia bellii (strain OSU 85-389).